We begin with the raw amino-acid sequence, 283 residues long: Phospholipid phosphatase 1 (283 aa).

Over 1-6 (MFDKTR) the chain is Cytoplasmic. The PDZ-binding; involved in localization to the apical cell membrane signature appears at 5-7 (TRL). The helical transmembrane segment at 7-27 (LPYVALDVICVLLAGLPFAIL) threads the bilayer. Residues 28 to 53 (TSRHTPFQRGIFCNDDSIKYPYKEDT) are Extracellular-facing. The chain crosses the membrane as a helical span at residues 54-74 (IPYALLGGIVIPFCIIVMSIG). The Cytoplasmic segment spans residues 75 to 88 (ESLSVYFNVLHSNS). The chain crosses the membrane as a helical span at residues 89-109 (FVGNPYIATIYKAVGAFLFGV). Topologically, residues 110 to 164 (SASQSLTDIAKYTIGSLRPHFLAICNPDWSKINCSDGYIEDYICQGNEEKVKEGR) are extracellular. The segment at 120 to 128 (KYTIGSLRP) is phosphatase sequence motif I. Asn142 is a glycosylation site (N-linked (GlcNAc...) asparagine). The helical transmembrane segment at 165-185 (LSFYSGHSSFSMYCMLFVALY) threads the bilayer. The interval 168–171 (YSGH) is phosphatase sequence motif II. His171 (proton donors) is an active-site residue. The Cytoplasmic portion of the chain corresponds to 186–199 (LQARMKGDWARLLR). The chain crosses the membrane as a helical span at residues 200-220 (PMLQFGLIAFSIYVGLSRVSD). The interval 216 to 227 (SRVSDYKHHWSD) is phosphatase sequence motif III. The Extracellular portion of the chain corresponds to 221 to 229 (YKHHWSDVT). Catalysis depends on His223, which acts as the Nucleophile. The chain crosses the membrane as a helical span at residues 230-250 (VGLIQGAAMAILVALYVSDFF). Topologically, residues 251–283 (KDTHSYKERKEEDPHTTLHETASSRNYSTNHEP) are cytoplasmic. A disordered region spans residues 260 to 283 (KEEDPHTTLHETASSRNYSTNHEP). The segment covering 269 to 283 (HETASSRNYSTNHEP) has biased composition (polar residues).

Belongs to the PA-phosphatase related phosphoesterase family. In terms of assembly, forms functional homodimers and homooligomers that are not required for substrate recognition and catalytic activity. Can also form heterooligomers with PLPP2 and PLPP3. In terms of processing, N-glycosylated. N-linked sugars are of the complex type. N-glycosylation is not required for the phosphatase activity. As to expression, widely expressed. Highly expressed in kidney and lung. Almost undetectable in brain, heart, bone, muscle or spleen.

It localises to the cell membrane. The protein localises to the apical cell membrane. Its subcellular location is the membrane raft. It is found in the membrane. The protein resides in the caveola. It carries out the reaction a 1,2-diacyl-sn-glycero-3-phosphate + H2O = a 1,2-diacyl-sn-glycerol + phosphate. It catalyses the reaction 1,2-dihexadecanoyl-sn-glycero-3-phosphate + H2O = 1,2-dihexadecanoyl-sn-glycerol + phosphate. The enzyme catalyses 1,2-di-(9Z-octadecenoyl)-sn-glycero-3-phosphate + H2O = 1,2-di-(9Z-octadecenoyl)-sn-glycerol + phosphate. The catalysed reaction is a monoacyl-sn-glycero-3-phosphate + H2O = a monoacylglycerol + phosphate. It carries out the reaction (9Z)-octadecenoyl-sn-glycero-3-phosphate + H2O = (9Z-octadecenoyl)-glycerol + phosphate. It catalyses the reaction a 1-acyl-sn-glycero-3-phosphate + H2O = a 1-acyl-sn-glycerol + phosphate. The enzyme catalyses 1-(9Z-octadecenoyl)-sn-glycero-3-phosphate + H2O = 1-(9Z-octadecenoyl)-sn-glycerol + phosphate. The catalysed reaction is a 1,2-diacyl-sn-glycerol 3-diphosphate + H2O = a 1,2-diacyl-sn-glycero-3-phosphate + phosphate + H(+). It carries out the reaction sphing-4-enine 1-phosphate + H2O = sphing-4-enine + phosphate. It catalyses the reaction an N-acylsphing-4-enine 1-phosphate + H2O = an N-acylsphing-4-enine + phosphate. The enzyme catalyses N-(octanoyl)-sphing-4-enine-1-phosphate + H2O = N-octanoylsphing-4-enine + phosphate. The catalysed reaction is N-(9Z-octadecenoyl)-ethanolamine phosphate + H2O = N-(9Z-octadecenoyl) ethanolamine + phosphate. It carries out the reaction 1-hexadecanoyl-2-(9Z-octadecenoyl)-sn-glycero-3-phosphate + H2O = 1-hexadecanoyl-2-(9Z-octadecenoyl)-sn-glycerol + phosphate. Its pathway is lipid metabolism; phospholipid metabolism. Magnesium-independent phospholipid phosphatase. Insensitive to N-ethylmaleimide. In terms of biological role, magnesium-independent phospholipid phosphatase of the plasma membrane that catalyzes the dephosphorylation of a variety of glycerolipid and sphingolipid phosphate esters including phosphatidate/PA, lysophosphatidate/LPA, diacylglycerol pyrophosphate/DGPP, sphingosine 1-phosphate/S1P and ceramide 1-phosphate/C1P. Also acts on N-oleoyl ethanolamine phosphate/N-(9Z-octadecenoyl)-ethanolamine phosphate, a potential physiological compound. Through its extracellular phosphatase activity allows both the hydrolysis and the cellular uptake of these bioactive lipid mediators from the milieu, regulating signal transduction in different cellular processes. It is for instance essential for the extracellular hydrolysis of S1P and subsequent conversion into intracellular S1P. Involved in the regulation of inflammation, platelets activation, cell proliferation and migration among other processes. May also have an intracellular activity to regulate phospholipid-mediated signaling pathways. The sequence is that of Phospholipid phosphatase 1 from Mus musculus (Mouse).